The following is a 426-amino-acid chain: Dihydrofolate synthase/folylpolyglutamate synthase (426 aa).

An ATP-binding site is contributed by 58–61; the sequence is GKGS. Ser-82 contacts Mg(2+). 7,8-dihydropteroate is bound at residue 121–124; that stretch reads TRFE. Glu-145 contacts Mg(2+). 152–154 is a 7,8-dihydropteroate binding site; sequence LDA. His-172 serves as a coordination point for Mg(2+). ATP-binding residues include Arg-289 and Asp-302.

This sequence belongs to the folylpolyglutamate synthase family. In terms of assembly, monomer. The cofactor is Mg(2+).

It carries out the reaction 7,8-dihydropteroate + L-glutamate + ATP = 7,8-dihydrofolate + ADP + phosphate + H(+). It catalyses the reaction (6S)-5,6,7,8-tetrahydrofolyl-(gamma-L-Glu)(n) + L-glutamate + ATP = (6S)-5,6,7,8-tetrahydrofolyl-(gamma-L-Glu)(n+1) + ADP + phosphate + H(+). The enzyme catalyses 10-formyltetrahydrofolyl-(gamma-L-Glu)(n) + L-glutamate + ATP = 10-formyltetrahydrofolyl-(gamma-L-Glu)(n+1) + ADP + phosphate + H(+). The catalysed reaction is (6R)-5,10-methylenetetrahydrofolyl-(gamma-L-Glu)(n) + L-glutamate + ATP = (6R)-5,10-methylenetetrahydrofolyl-(gamma-L-Glu)(n+1) + ADP + phosphate + H(+). The protein operates within cofactor biosynthesis; tetrahydrofolate biosynthesis; 7,8-dihydrofolate from 2-amino-4-hydroxy-6-hydroxymethyl-7,8-dihydropteridine diphosphate and 4-aminobenzoate: step 2/2. Its pathway is cofactor biosynthesis; tetrahydrofolylpolyglutamate biosynthesis. In terms of biological role, functions in two distinct reactions of the de novo folate biosynthetic pathway. Catalyzes the addition of a glutamate residue to dihydropteroate (7,8-dihydropteroate or H2Pte) to form dihydrofolate (7,8-dihydrofolate monoglutamate or H2Pte-Glu). Also catalyzes successive additions of L-glutamate to tetrahydrofolate or 10-formyltetrahydrofolate or 5,10-methylenetetrahydrofolate, leading to folylpolyglutamate derivatives. The sequence is that of Dihydrofolate synthase/folylpolyglutamate synthase (folC) from Buchnera aphidicola subsp. Baizongia pistaciae (strain Bp).